We begin with the raw amino-acid sequence, 417 residues long: UDP-N-acetylmuramoylalanine--D-glutamate ligase (417 aa).

Position 108–114 (108–114) interacts with ATP; that stretch reads GSNGKTT.

The protein belongs to the MurCDEF family.

The protein resides in the cytoplasm. It carries out the reaction UDP-N-acetyl-alpha-D-muramoyl-L-alanine + D-glutamate + ATP = UDP-N-acetyl-alpha-D-muramoyl-L-alanyl-D-glutamate + ADP + phosphate + H(+). It participates in cell wall biogenesis; peptidoglycan biosynthesis. Functionally, cell wall formation. Catalyzes the addition of glutamate to the nucleotide precursor UDP-N-acetylmuramoyl-L-alanine (UMA). This is UDP-N-acetylmuramoylalanine--D-glutamate ligase from Chlamydia pneumoniae (Chlamydophila pneumoniae).